We begin with the raw amino-acid sequence, 165 residues long: MTTRKDSELEGVTLLGNQGTNYLFDYSPEVLESFPNKHENRDYFVKFNCPEFTSLCPKTGQPDFATIYISYIPDKKMVESKSLKLYLFSFRNHGDFHEDCMNIIMNDLIELMDPRYIEVWGKFTPRGGISIDPYTNYGKPGTKYEKMAEYRMMNHDLYPETIDNR.

Cysteine 56 serves as the catalytic Thioimide intermediate. Aspartate 63 acts as the Proton donor in catalysis. Residues 78–80 (VES) and 97–98 (HE) contribute to the substrate site.

It belongs to the GTP cyclohydrolase I family. QueF type 1 subfamily.

It is found in the cytoplasm. It catalyses the reaction 7-aminomethyl-7-carbaguanine + 2 NADP(+) = 7-cyano-7-deazaguanine + 2 NADPH + 3 H(+). The protein operates within tRNA modification; tRNA-queuosine biosynthesis. Catalyzes the NADPH-dependent reduction of 7-cyano-7-deazaguanine (preQ0) to 7-aminomethyl-7-deazaguanine (preQ1). In Bacillus licheniformis (strain ATCC 14580 / DSM 13 / JCM 2505 / CCUG 7422 / NBRC 12200 / NCIMB 9375 / NCTC 10341 / NRRL NRS-1264 / Gibson 46), this protein is NADPH-dependent 7-cyano-7-deazaguanine reductase.